A 239-amino-acid chain; its full sequence is Ribonuclease PH (239 aa).

Residues Arg86 and 124-126 (GTR) contribute to the phosphate site.

This sequence belongs to the RNase PH family. As to quaternary structure, homohexameric ring arranged as a trimer of dimers.

It catalyses the reaction tRNA(n+1) + phosphate = tRNA(n) + a ribonucleoside 5'-diphosphate. Functionally, phosphorolytic 3'-5' exoribonuclease that plays an important role in tRNA 3'-end maturation. Removes nucleotide residues following the 3'-CCA terminus of tRNAs; can also add nucleotides to the ends of RNA molecules by using nucleoside diphosphates as substrates, but this may not be physiologically important. Probably plays a role in initiation of 16S rRNA degradation (leading to ribosome degradation) during starvation. This Rhizobium leguminosarum bv. trifolii (strain WSM2304) protein is Ribonuclease PH.